The primary structure comprises 215 residues: E3 ubiquitin-protein ligase znrf1 (215 aa).

2 disordered regions span residues 1 to 39 and 66 to 96; these read MGGK…PGGT and YTPR…ETGG. Gly-2 is lipidated: N-myristoyl glycine. The RING-type; atypical zinc finger occupies 172-213; sequence CVICLEELQQGDTIARLPCLCIYHKSCIDSWFEINRSCPEHP.

Its subcellular location is the endosome. It is found in the lysosome. The protein localises to the membrane. The catalysed reaction is S-ubiquitinyl-[E2 ubiquitin-conjugating enzyme]-L-cysteine + [acceptor protein]-L-lysine = [E2 ubiquitin-conjugating enzyme]-L-cysteine + N(6)-ubiquitinyl-[acceptor protein]-L-lysine.. Its pathway is protein modification; protein ubiquitination. Functionally, E3 ubiquitin-protein ligase that plays a role in neuron cells differentiation. Plays a role in the establishment and maintenance of neuronal transmission and plasticity. The protein is E3 ubiquitin-protein ligase znrf1 (znrf1) of Danio rerio (Zebrafish).